The sequence spans 243 residues: Protein GrpE (243 aa).

This sequence belongs to the GrpE family. Homodimer.

Its subcellular location is the cytoplasm. Participates actively in the response to hyperosmotic and heat shock by preventing the aggregation of stress-denatured proteins, in association with DnaK and GrpE. It is the nucleotide exchange factor for DnaK and may function as a thermosensor. Unfolded proteins bind initially to DnaJ; upon interaction with the DnaJ-bound protein, DnaK hydrolyzes its bound ATP, resulting in the formation of a stable complex. GrpE releases ADP from DnaK; ATP binding to DnaK triggers the release of the substrate protein, thus completing the reaction cycle. Several rounds of ATP-dependent interactions between DnaJ, DnaK and GrpE are required for fully efficient folding. The polypeptide is Protein GrpE (Mycoplasma mobile (strain ATCC 43663 / 163K / NCTC 11711) (Mesomycoplasma mobile)).